We begin with the raw amino-acid sequence, 172 residues long: Crossover junction endodeoxyribonuclease RuvC (172 aa).

Catalysis depends on residues aspartate 11, glutamate 70, and aspartate 142. Positions 11, 70, and 142 each coordinate Mg(2+).

The protein belongs to the RuvC family. As to quaternary structure, homodimer which binds Holliday junction (HJ) DNA. The HJ becomes 2-fold symmetrical on binding to RuvC with unstacked arms; it has a different conformation from HJ DNA in complex with RuvA. In the full resolvosome a probable DNA-RuvA(4)-RuvB(12)-RuvC(2) complex forms which resolves the HJ. Mg(2+) serves as cofactor.

It localises to the cytoplasm. It catalyses the reaction Endonucleolytic cleavage at a junction such as a reciprocal single-stranded crossover between two homologous DNA duplexes (Holliday junction).. In terms of biological role, the RuvA-RuvB-RuvC complex processes Holliday junction (HJ) DNA during genetic recombination and DNA repair. Endonuclease that resolves HJ intermediates. Cleaves cruciform DNA by making single-stranded nicks across the HJ at symmetrical positions within the homologous arms, yielding a 5'-phosphate and a 3'-hydroxyl group; requires a central core of homology in the junction. The consensus cleavage sequence is 5'-(A/T)TT(C/G)-3'. Cleavage occurs on the 3'-side of the TT dinucleotide at the point of strand exchange. HJ branch migration catalyzed by RuvA-RuvB allows RuvC to scan DNA until it finds its consensus sequence, where it cleaves and resolves the cruciform DNA. This Hydrogenovibrio crunogenus (strain DSM 25203 / XCL-2) (Thiomicrospira crunogena) protein is Crossover junction endodeoxyribonuclease RuvC.